A 342-amino-acid chain; its full sequence is MNTNDFDFELPEELIAQTPLEKRDSSKLLIIDHRQKTMVDSHFDHIIDQLNPGDALVMNNTRVLPARLYGEKPDTHGHVELLLLKNTQGDQWEVLAKPAKRLKVGSQVNFGDGRLKATIIDELEHGGRIVEFSYDGIFLEVLESLGEMPLPPYIHEKLEDAERYQTVYAKENGSAAAPTAGLHFTTDLLKKIEAKGVHLVYLTLHVGLGTFRPVSVDNLDEHDMHSEFYSLSEEAAQTLRDVKQAGGRVVAVGTTSIRTLETIGGKFQGDIQADSGWTNIFIKPGYQFKVVDAFSTNFHLPKSTLVMLVSAFAGRDFVLEAYRHAVDEKYRFFSFGDAMFVN.

This sequence belongs to the QueA family. As to quaternary structure, monomer.

It localises to the cytoplasm. The enzyme catalyses 7-aminomethyl-7-carbaguanosine(34) in tRNA + S-adenosyl-L-methionine = epoxyqueuosine(34) in tRNA + adenine + L-methionine + 2 H(+). The protein operates within tRNA modification; tRNA-queuosine biosynthesis. Transfers and isomerizes the ribose moiety from AdoMet to the 7-aminomethyl group of 7-deazaguanine (preQ1-tRNA) to give epoxyqueuosine (oQ-tRNA). The sequence is that of S-adenosylmethionine:tRNA ribosyltransferase-isomerase from Streptococcus pyogenes serotype M12 (strain MGAS2096).